Here is a 446-residue protein sequence, read N- to C-terminus: T-box transcription factor TBX20 (446 aa).

A disordered region spans residues 50–80; it reads SCHPNLGDLPPLETHSDFSSGGGTGSGAPLC. Positions 108–287 form a DNA-binding region, T-box; the sequence is LWDKFHELGT…SNPFAKGFRD (180 aa).

The protein localises to the nucleus. Functionally, transcriptional regulator that may play a very early role in the differentiation of the cardiac precursors. The sequence is that of T-box transcription factor TBX20 (tbx20) from Danio rerio (Zebrafish).